Reading from the N-terminus, the 1447-residue chain is Regulator of G-protein signaling 12 (1447 aa).

The tract at residues 1 to 21 (MFRAGEASKRPLPGPSPPRVR) is disordered. One can recognise a PDZ domain in the interval 22–98 (SVEVARGRAG…GVLHMVIAEG (77 aa)). Phosphoserine is present on residues Ser-172 and Ser-195. Lys-196 is covalently cross-linked (Glycyl lysine isopeptide (Lys-Gly) (interchain with G-Cter in SUMO2)). A PID domain is found at 228–340 (VAMIVGYLGS…GALRTSCHVF (113 aa)). Disordered stretches follow at residues 410–429 (ADAH…IGNF) and 443–482 (LGGS…DPEG). The segment covering 413–425 (HQNNSTSSNSDSG) has biased composition (polar residues). Positions 451 to 464 (GPGGSAWDGVGGRG) are enriched in gly residues. An omega-N-methylarginine mark is found at Arg-524 and Arg-633. The disordered stretch occupies residues 618–652 (NVRKTKEDKKGSKFGRGTGLTQPSQRTSARRSFGR). Ser-661 and Ser-671 each carry phosphoserine. Residues 715–832 (SFERLLQDPV…LKSPLYQECI (118 aa)) form the RGS domain. Polar residues predominate over residues 843 to 853 (DSQQVPSSPAS). The segment at 843-941 (DSQQVPSSPA…RESQGSVSSA (99 aa)) is disordered. Ser-850 and Ser-879 each carry phosphoserine. The segment covering 914-923 (EHGDHADDAL) has biased composition (basic and acidic residues). Ser-943 carries the post-translational modification Phosphoserine. RBD domains lie at 962-1032 (KHCC…LEKR) and 1034-1104 (LFRL…LEEK). Basic and acidic residues predominate over residues 1103-1117 (EKDPSRGKASADKQK). Residues 1103 to 1169 (EKDPSRGKAS…RDPRLSKREE (67 aa)) are disordered. Polar residues predominate over residues 1122-1136 (KQNTAVNSSSRNHSA). The segment covering 1151–1169 (IKGENGKNARDPRLSKREE) has biased composition (basic and acidic residues). In terms of domain architecture, GoLoco spans 1187–1209 (AEEFFELISKAQSNRADDQRGLL). Residues 1240–1447 (GFSKRSATGN…KTSAHHATFV (208 aa)) form a disordered region. The segment covering 1244–1258 (RSATGNGRESASQPG) has biased composition (polar residues). Composition is skewed to low complexity over residues 1267–1280 (SSDS…SASS) and 1289–1298 (PPGQKSPSGP). Residues 1301–1313 (TPQSPVSLAQEGT) are compositionally biased toward polar residues.

Interacts with GNAI1. Interacts with GNAI2 and GNAI3; the interactions are GDP-dependent. As to expression, isoform 3 is brain specific.

It is found in the nucleus. The protein resides in the cytoplasm. Its subcellular location is the cell projection. The protein localises to the dendrite. It localises to the synapse. It is found in the nucleus matrix. Regulates G protein-coupled receptor signaling cascades. Inhibits signal transduction by increasing the GTPase activity of G protein alpha subunits, thereby driving them into their inactive GDP-bound form. Its function is as follows. Behaves as a cell cycle-dependent transcriptional repressor, promoting inhibition of S-phase DNA synthesis. The sequence is that of Regulator of G-protein signaling 12 (RGS12) from Homo sapiens (Human).